The primary structure comprises 258 residues: Diacetyl reductase [(S)-acetoin forming] (258 aa).

NAD(+) is bound at residue 8-32 (LVTGGAQGIGFKIAERLVEDGFKVA). Residue S141 participates in substrate binding. Catalysis depends on Y154, which acts as the Proton acceptor. K158 is a catalytic residue.

Belongs to the short-chain dehydrogenases/reductases (SDR) family.

The catalysed reaction is (S)-acetoin + NAD(+) = diacetyl + NADH + H(+). Functionally, catalyzes the irreversible reduction of 2,3-butanediol to (S)-acetoin in the presence of NADH. The chain is Diacetyl reductase [(S)-acetoin forming] (butA) from Staphylococcus aureus (strain Mu50 / ATCC 700699).